A 322-amino-acid polypeptide reads, in one-letter code: Zinc finger C2HC domain-containing protein CBG14627 (322 aa).

C2HC/C3H-type zinc fingers lie at residues 9-38 (PVYPCPICGRKFVKSSLEKHESACRKLATL) and 119-148 (DYVQCEYCSRNFNAAAAERHIPFCREQTTR). The Zn(2+) site is built by Cys-13, Cys-16, His-28, Cys-32, Cys-123, Cys-126, His-138, and Cys-142. The segment at 144–322 (EQTTRKQGGK…SRNNSRSRIF (179 aa)) is disordered. Over residues 148 to 168 (RKQGGKSSAGNRGLTSNNYRS) the composition is skewed to polar residues. Over residues 171–219 (SKHEGRKQESSSRNGSAERKTTTRGRDGSLSRARRDDSNDLTNRRKSLE) the composition is skewed to basic and acidic residues. The segment covering 220–238 (TRSQLTTGQANNRTTSLSA) has biased composition (polar residues). Over residues 278–294 (TTTTASASRSGSGSSSR) the composition is skewed to low complexity. A compositionally biased stretch (basic and acidic residues) spans 296–305 (RTRDESRESR). A compositionally biased stretch (low complexity) spans 311 to 322 (SNSRNNSRSRIF).

Belongs to the ZC2HC1 family. The cofactor is Zn(2+).

This Caenorhabditis briggsae protein is Zinc finger C2HC domain-containing protein CBG14627.